A 594-amino-acid polypeptide reads, in one-letter code: UvrABC system protein C (594 aa).

The GIY-YIG domain maps to 17-94 (LEPGCYLMKD…IKQYQPRYNI (78 aa)). The UVR domain maps to 199–234 (KTILNHLEERMNKASEQLDFEQAKEYRDMIQHIHNL).

Belongs to the UvrC family. Interacts with UvrB in an incision complex.

It is found in the cytoplasm. Its function is as follows. The UvrABC repair system catalyzes the recognition and processing of DNA lesions. UvrC both incises the 5' and 3' sides of the lesion. The N-terminal half is responsible for the 3' incision and the C-terminal half is responsible for the 5' incision. This Staphylococcus epidermidis (strain ATCC 35984 / DSM 28319 / BCRC 17069 / CCUG 31568 / BM 3577 / RP62A) protein is UvrABC system protein C.